The primary structure comprises 234 residues: Lipoprotein-releasing system ATP-binding protein LolD (234 aa).

Residues 7 to 234 (LLCNNLCKKY…QDELTVTGAL (228 aa)) enclose the ABC transporter domain. Position 43–50 (43–50 (GSSGSGKS)) interacts with ATP.

The protein belongs to the ABC transporter superfamily. Lipoprotein translocase (TC 3.A.1.125) family. In terms of assembly, the complex is composed of two ATP-binding proteins (LolD) and two transmembrane proteins (LolC and LolE).

It localises to the cell inner membrane. In terms of biological role, part of the ABC transporter complex LolCDE involved in the translocation of mature outer membrane-directed lipoproteins, from the inner membrane to the periplasmic chaperone, LolA. Responsible for the formation of the LolA-lipoprotein complex in an ATP-dependent manner. The sequence is that of Lipoprotein-releasing system ATP-binding protein LolD from Photorhabdus laumondii subsp. laumondii (strain DSM 15139 / CIP 105565 / TT01) (Photorhabdus luminescens subsp. laumondii).